The chain runs to 275 residues: Formamidopyrimidine-DNA glycosylase (275 aa).

The active-site Schiff-base intermediate with DNA is Pro-2. Glu-3 functions as the Proton donor in the catalytic mechanism. The active-site Proton donor; for beta-elimination activity is the Lys-58. DNA-binding residues include His-92, Arg-111, and Arg-154. Residues 239–273 (HVYHRQGLPCQRCGTPIERIKVAQRGTHFCPHCQV) form an FPG-type zinc finger. Arg-263 acts as the Proton donor; for delta-elimination activity in catalysis.

It belongs to the FPG family. In terms of assembly, monomer. Requires Zn(2+) as cofactor.

It carries out the reaction Hydrolysis of DNA containing ring-opened 7-methylguanine residues, releasing 2,6-diamino-4-hydroxy-5-(N-methyl)formamidopyrimidine.. It catalyses the reaction 2'-deoxyribonucleotide-(2'-deoxyribose 5'-phosphate)-2'-deoxyribonucleotide-DNA = a 3'-end 2'-deoxyribonucleotide-(2,3-dehydro-2,3-deoxyribose 5'-phosphate)-DNA + a 5'-end 5'-phospho-2'-deoxyribonucleoside-DNA + H(+). Its function is as follows. Involved in base excision repair of DNA damaged by oxidation or by mutagenic agents. Acts as a DNA glycosylase that recognizes and removes damaged bases. Has a preference for oxidized purines, such as 7,8-dihydro-8-oxoguanine (8-oxoG). Has AP (apurinic/apyrimidinic) lyase activity and introduces nicks in the DNA strand. Cleaves the DNA backbone by beta-delta elimination to generate a single-strand break at the site of the removed base with both 3'- and 5'-phosphates. This is Formamidopyrimidine-DNA glycosylase from Pediococcus pentosaceus (strain ATCC 25745 / CCUG 21536 / LMG 10740 / 183-1w).